A 252-amino-acid chain; its full sequence is Metalloprotease LoiP (252 aa).

An N-terminal signal peptide occupies residues 1 to 18 (MKIRALLVAMSVATVLTG). A lipid anchor (N-palmitoyl cysteine) is attached at Cys-19. A lipid anchor (S-diacylglycerol cysteine) is attached at Cys-19. Residues Cys-53 and Cys-108 are joined by a disulfide bond. His-130 provides a ligand contact to Zn(2+). Glu-131 is an active-site residue. His-134 and Glu-189 together coordinate Zn(2+). The disordered stretch occupies residues 224-252 (RQSSMFDDHPASAERAQHIRDRMSADGIK).

Belongs to the peptidase M48B family. In terms of assembly, interacts with Era and BepA. Zn(2+) serves as cofactor. Post-translationally, the intramolecular disulfide bond improves the stability and the activity of LoiP. It forms even in the absence of the oxido-reductase DsbA.

It localises to the cell outer membrane. Functionally, metalloprotease that cleaves substrates preferentially between Phe-Phe residues. Plays a role in response to some stress conditions. Seems to regulate the expression of speB. The polypeptide is Metalloprotease LoiP (loiP) (Escherichia coli (strain K12)).